A 475-amino-acid polypeptide reads, in one-letter code: AAA-ATPase At1g43910 (475 aa).

The helical transmembrane segment at 11-28 threads the bilayer; it reads VSAVFSLYTSFSAITMLF. Threonine 85 is modified (phosphothreonine). 246–253 contacts ATP; it reads GPPGTGKS. Disordered stretches follow at residues 306–328 and 453–475; these read SRRR…PQKR and KGED…EAET. The segment covering 457-467 has biased composition (acidic residues); that stretch reads SSVEEEGEIED.

The protein belongs to the AAA ATPase family. BCS1 subfamily. Mg(2+) serves as cofactor. In terms of tissue distribution, expressed in developing shoots.

It localises to the membrane. It carries out the reaction ATP + H2O = ADP + phosphate + H(+). This chain is AAA-ATPase At1g43910, found in Arabidopsis thaliana (Mouse-ear cress).